The primary structure comprises 904 residues: Shieldin complex subunit 2 (904 aa).

The tract at residues 1-60 (MSGGSQVHIFWGAPVAPLKMTVSQDTASLMSVADPWKKIHLLYSQHSLYLKDEKQHKNLE) is sufficient for interaction with SHLD3 and MAD2L2. The tract at residues 1 to 568 (MSGGSQVHIF…AYVSSKHSYL (568 aa)) is interaction with ASTE1. The segment at 721–891 (KCSGVVLIQA…LQQDFSLLDF (171 aa)) is mediates interaction with SHLD1.

It belongs to the SHLD2 family. In terms of assembly, component of the shieldin complex, consisting of SHLD1, SHLD2, SHLD3 and MAD2L2/REV7. Within the complex, SHLD2 forms a scaffold which interacts with a SHLD3-MAD2L2 subcomplex via its N-terminus, and with SHLD1 via its C-terminus. Interacts with TP53BP1. Interacts with RIF1. Interacts with ASTE1.

It is found in the chromosome. Its function is as follows. Component of the shieldin complex, which plays an important role in repair of DNA double-stranded breaks (DSBs). During G1 and S phase of the cell cycle, the complex functions downstream of TP53BP1 to promote non-homologous end joining (NHEJ) and suppress DNA end resection. Mediates various NHEJ-dependent processes including immunoglobulin class-switch recombination, and fusion of unprotected telomeres. This is Shieldin complex subunit 2 from Pongo abelii (Sumatran orangutan).